We begin with the raw amino-acid sequence, 123 residues long: Protein Wnt-3a (123 aa).

A lipid anchor (O-palmitoleoyl serine) is attached at serine 1. Cysteine 89 and cysteine 104 are disulfide-bonded. N-linked (GlcNAc...) asparagine glycosylation occurs at asparagine 90.

Belongs to the Wnt family. In terms of processing, disulfide bonds have critical and distinct roles in secretion and activity. Loss of each conserved cysteine results in high molecular weight oxidized Wnt oligomers, which are formed through inter-Wnt disulfide bonding. Palmitoleoylation is required for efficient binding to frizzled receptors. Depalmitoleoylation leads to Wnt signaling pathway inhibition.

The protein localises to the secreted. Its subcellular location is the extracellular space. The protein resides in the extracellular matrix. Functionally, ligand for members of the frizzled family of seven transmembrane receptors. Functions in the canonical Wnt signaling pathway that results in activation of transcription factors of the TCF/LEF family. Required for normal embryonic mesoderm development and formation of caudal somites. Required for normal morphogenesis of the developing neural tube. This is Protein Wnt-3a (WNT-3A) from Alopias vulpinus (Common thresher shark).